We begin with the raw amino-acid sequence, 545 residues long: Glutamyl-tRNA(Gln) amidotransferase subunit B-1, chloroplastic/mitochondrial (545 aa).

Belongs to the GatB/GatE family. GatB subfamily. Subunit of the heterotrimeric GatCAB amidotransferase (AdT) complex, composed of A, B and C subunits.

It is found in the mitochondrion. Its subcellular location is the plastid. It localises to the chloroplast. It catalyses the reaction L-glutamyl-tRNA(Gln) + L-glutamine + ATP + H2O = L-glutaminyl-tRNA(Gln) + L-glutamate + ADP + phosphate + H(+). Functionally, allows the formation of correctly charged Gln-tRNA(Gln) through the transamidation of misacylated Glu-tRNA(Gln) in chloroplasts and mitochondria. The reaction takes place in the presence of glutamine and ATP through an activated gamma-phospho-Glu-tRNA(Gln). The chain is Glutamyl-tRNA(Gln) amidotransferase subunit B-1, chloroplastic/mitochondrial from Micromonas pusilla (strain CCMP1545) (Picoplanktonic green alga).